Consider the following 415-residue polypeptide: Probable G-protein coupled receptor 19 (415 aa).

At 1–69 (MGFDHRMETD…LNPGEVATAS (69 aa)) the chain is on the extracellular side. 2 N-linked (GlcNAc...) asparagine glycosylation sites follow: asparagine 25 and asparagine 52. A helical transmembrane segment spans residues 70–90 (IFFGALWLFSIFGNSLVCLVI). Residues 91–102 (HRSRRTQSTTNY) are Cytoplasmic-facing. Residues 103–123 (FVVSMACADLLISVASTPFVV) traverse the membrane as a helical segment. The Extracellular segment spans residues 124-152 (LQFTTGRWTLGSAMCKVVRYFQYLTPGVQ). Cysteine 138 and cysteine 210 are disulfide-bonded. A helical transmembrane segment spans residues 153–173 (IYVLLSICIDRFYTIVYPLSF). At 174-182 (KVSREKAKR) the chain is on the cytoplasmic side. Residues 183–203 (MIAASWILDAAFVTPVFFFYG) traverse the membrane as a helical segment. The Extracellular portion of the chain corresponds to 204–221 (SNWDSHCNYFLPPSWEGT). The helical transmembrane segment at 222 to 242 (AYTVIHFLVGFVIPSVLIILF) threads the bilayer. The Cytoplasmic segment spans residues 243–277 (YQKVIKYIWRIGTDGRTLRRTMNIVPRTKVKTVKM). A helical transmembrane segment spans residues 278-298 (FLLLNLVFLFSWLPFHVAQLW). Topologically, residues 299–309 (HPHEQDYRKSS) are extracellular. Residues 310–332 (LVFTAVTWVSFSSSASKPTLYSI) traverse the membrane as a helical segment. At 333–415 (YNANFRRGMK…INSNPPNTFV (83 aa)) the chain is on the cytoplasmic side.

This sequence belongs to the G-protein coupled receptor 1 family. As to expression, abundant expression in the brain.

It localises to the cell membrane. Its function is as follows. G-protein coupled receptor that plays a role in the regulation of circadian rhythms and energy metabolism. Participates in maintaining proper circadian gene expression in the suprachiasmatic nucleus (SCN), the locus of the master circadian clock in the brain. May function as a coordinator of aging-associated metabolic dysfunction, stress response, DNA integrity management, and eventual senescence. Upon binding to adropin, modulates mitochondrial energy metabolism via the p44/42-PDK4 signaling pathway, influencing pyruvate dehydrogenase activity. In Rattus norvegicus (Rat), this protein is Probable G-protein coupled receptor 19 (Gpr19).